A 445-amino-acid polypeptide reads, in one-letter code: MQTLNKKVAVVTLGCPKNQVDSEIMTGHMMTKYQIVNEPEQADIIIINTCTFIESAKAESIDMILQMSQYKEEGQCQTLVATGCLAQRYGDELLAEIPELDGIMGTGNVAEILETLEEAEKSKVRRISAEAPAFIYDETMPRVRLSPKQYAYVKVAEGCDNYCTYCIIPHVRGHFRSRTQESILREVEAMASEGVKEVLLIAQDTTRYGKDRYGEYRLPSLIKEIARIEGIEWIRLMYCYPELFTDELITVMKETPKVCRYLDLPLQHAHDKVLAEMNRRGTIREAEGLIHKLRQEIPDIRLRTTMITGFPGETEEEFQAVVEFAKKIRFDRLGAFAYSQEESTPAAQREDQVPEEIRQQRRDQLMELQHDIAYEQQQRWVGQTLKVLIEEALPDQRWVGRSEGDAPEIDGVVYVDSPGELEIGDFVLVKITRADSYDLMGEVVQ.

The region spanning 6–121 (KKVAVVTLGC…ILETLEEAEK (116 aa)) is the MTTase N-terminal domain. Positions 15, 50, 84, 159, 163, and 166 each coordinate [4Fe-4S] cluster. One can recognise a Radical SAM core domain in the interval 145–375 (LSPKQYAYVK…MELQHDIAYE (231 aa)). Positions 378–445 (QRWVGQTLKV…SYDLMGEVVQ (68 aa)) constitute a TRAM domain.

Belongs to the methylthiotransferase family. RimO subfamily. [4Fe-4S] cluster is required as a cofactor.

It localises to the cytoplasm. It catalyses the reaction L-aspartate(89)-[ribosomal protein uS12]-hydrogen + (sulfur carrier)-SH + AH2 + 2 S-adenosyl-L-methionine = 3-methylsulfanyl-L-aspartate(89)-[ribosomal protein uS12]-hydrogen + (sulfur carrier)-H + 5'-deoxyadenosine + L-methionine + A + S-adenosyl-L-homocysteine + 2 H(+). In terms of biological role, catalyzes the methylthiolation of an aspartic acid residue of ribosomal protein uS12. This Desulfitobacterium hafniense (strain Y51) protein is Ribosomal protein uS12 methylthiotransferase RimO.